Reading from the N-terminus, the 253-residue chain is 2-C-methyl-D-erythritol 4-phosphate cytidylyltransferase (253 aa).

It belongs to the IspD/TarI cytidylyltransferase family. IspD subfamily.

It catalyses the reaction 2-C-methyl-D-erythritol 4-phosphate + CTP + H(+) = 4-CDP-2-C-methyl-D-erythritol + diphosphate. Its pathway is isoprenoid biosynthesis; isopentenyl diphosphate biosynthesis via DXP pathway; isopentenyl diphosphate from 1-deoxy-D-xylulose 5-phosphate: step 2/6. Catalyzes the formation of 4-diphosphocytidyl-2-C-methyl-D-erythritol from CTP and 2-C-methyl-D-erythritol 4-phosphate (MEP). This chain is 2-C-methyl-D-erythritol 4-phosphate cytidylyltransferase, found in Idiomarina loihiensis (strain ATCC BAA-735 / DSM 15497 / L2-TR).